Here is a 445-residue protein sequence, read N- to C-terminus: MNEEYDVIVLGTGLTECILSGIMSVNGKKVLHMDRNPYYGGESASITPLEDLYKRFNIPGAPPASMGRGRDWNVDLIPKFLMANGQLVKMLLFTEVTRYLDFKVTEGSFVYKGGKIYKVPSTEAEALASSLMGLFEKRRFRKFLVYVANFDENDPRTFEGVDPKKTAMREVYKKFDLGQDVIDFTGHALALYRTDDYLDQPCCETINRIKLYSESLARYGKSPYLYPLYGLGELPQGFARLSAIYGGTYMLNKPIEEIIVQNGKVIGVKSEGEIARCKQLICDPSYVKDRVEKVGQVIRVICILSHPIKNTSDANSCQIIIPQNQVNRKSDIYVCMISSAHNVAAQGKYIAIASTTVETKEPEKEIRPALELLKPIEQKFVSISDLLVPKDLGTDSQIFISRTYDATTHFETTCGDIKDIYKRMTGSEFDFEEMKRKKNDIYGED.

Position 1 is an N-acetylmethionine (Met1). Lys112 carries the post-translational modification N6-acetyllysine. Ser130 is subject to Phosphoserine. Residue Lys269 is modified to N6-acetyllysine. Ser382 carries the phosphoserine modification.

The protein belongs to the Rab GDI family. Interacts with RHOH. Interacts with the GDP-bound inactive forms of RAB3A, RAB3B, RAB3C, RAB5A, RAB5B, RAB5C, RAB8A, RAB8B, RAB10, RAB12, RAB35, and RAB43; binds RAB3D to a lesser extent. Interacts with DZIP1; this interaction negatively regulates the interaction of GDI2 with GDP-bound RAB8A.

Its subcellular location is the cytoplasm. It localises to the membrane. It is found in the golgi apparatus. The protein localises to the trans-Golgi network. In terms of biological role, GDP-dissociation inhibitor preventing the GDP to GTP exchange of most Rab proteins. By keeping these small GTPases in their inactive GDP-bound form regulates intracellular membrane trafficking. Negatively regulates protein transport to the cilium and ciliogenesis through the inhibition of RAB8A. In Sus scrofa (Pig), this protein is Rab GDP dissociation inhibitor beta (GDI2).